The following is a 150-amino-acid chain: Centrin-B (150 aa).

EF-hand domains lie at 12–46 (DQIS…LGCE), 80–114 (DSMS…IGEE), and 115–150 (CSDS…KKVL). Ca(2+)-binding residues include aspartate 128, aspartate 130, aspartate 132, and glutamate 139.

The protein belongs to the centrin family.

The protein resides in the cytoplasm. It localises to the cytoskeleton. It is found in the microtubule organizing center. Its subcellular location is the centrosome. Plays a fundamental role in microtubule-organizing center structure and function. In Dictyostelium discoideum (Social amoeba), this protein is Centrin-B (cenB).